The sequence spans 473 residues: Ribulose bisphosphate carboxylase large chain 1 (473 aa).

Asparagine 116 and threonine 166 together coordinate substrate. The active-site Proton acceptor is the lysine 168. A substrate-binding site is contributed by lysine 170. 3 residues coordinate Mg(2+): lysine 194, aspartate 196, and glutamate 197. Lysine 194 carries the N6-carboxylysine modification. The active-site Proton acceptor is the histidine 287. Substrate-binding residues include arginine 288, histidine 320, and serine 372.

This sequence belongs to the RuBisCO large chain family. Type I subfamily. Heterohexadecamer of 8 large chains and 8 small chains. Mg(2+) is required as a cofactor.

It carries out the reaction 2 (2R)-3-phosphoglycerate + 2 H(+) = D-ribulose 1,5-bisphosphate + CO2 + H2O. It catalyses the reaction D-ribulose 1,5-bisphosphate + O2 = 2-phosphoglycolate + (2R)-3-phosphoglycerate + 2 H(+). RuBisCO catalyzes two reactions: the carboxylation of D-ribulose 1,5-bisphosphate, the primary event in carbon dioxide fixation, as well as the oxidative fragmentation of the pentose substrate. Both reactions occur simultaneously and in competition at the same active site. This chain is Ribulose bisphosphate carboxylase large chain 1, found in Nitrobacter winogradskyi (strain ATCC 25391 / DSM 10237 / CIP 104748 / NCIMB 11846 / Nb-255).